Here is an 880-residue protein sequence, read N- to C-terminus: DNA-directed RNA polymerase subunit beta C-terminal section (880 aa).

Belongs to the RNA polymerase beta chain family. In terms of assembly, in plastids the minimal PEP RNA polymerase catalytic core is composed of four subunits: alpha, beta, beta', and beta''. When a (nuclear-encoded) sigma factor is associated with the core the holoenzyme is formed, which can initiate transcription.

It localises to the plastid. Its subcellular location is the chloroplast. The enzyme catalyses RNA(n) + a ribonucleoside 5'-triphosphate = RNA(n+1) + diphosphate. In terms of biological role, DNA-dependent RNA polymerase catalyzes the transcription of DNA into RNA using the four ribonucleoside triphosphates as substrates. This chain is DNA-directed RNA polymerase subunit beta C-terminal section (rpoB2), found in Pleurastrum terricola (Filamentous green alga).